The primary structure comprises 226 residues: Biosynthetic peptidoglycan transglycosylase (226 aa).

Residues 10–30 (IIMTLLALLILPYLLIPVYAL) traverse the membrane as a helical segment.

The protein belongs to the glycosyltransferase 51 family.

The protein localises to the cell inner membrane. It catalyses the reaction [GlcNAc-(1-&gt;4)-Mur2Ac(oyl-L-Ala-gamma-D-Glu-L-Lys-D-Ala-D-Ala)](n)-di-trans,octa-cis-undecaprenyl diphosphate + beta-D-GlcNAc-(1-&gt;4)-Mur2Ac(oyl-L-Ala-gamma-D-Glu-L-Lys-D-Ala-D-Ala)-di-trans,octa-cis-undecaprenyl diphosphate = [GlcNAc-(1-&gt;4)-Mur2Ac(oyl-L-Ala-gamma-D-Glu-L-Lys-D-Ala-D-Ala)](n+1)-di-trans,octa-cis-undecaprenyl diphosphate + di-trans,octa-cis-undecaprenyl diphosphate + H(+). Its pathway is cell wall biogenesis; peptidoglycan biosynthesis. In terms of biological role, peptidoglycan polymerase that catalyzes glycan chain elongation from lipid-linked precursors. The chain is Biosynthetic peptidoglycan transglycosylase from Agrobacterium fabrum (strain C58 / ATCC 33970) (Agrobacterium tumefaciens (strain C58)).